A 312-amino-acid polypeptide reads, in one-letter code: HPr kinase/phosphorylase (312 aa).

Active-site residues include His139 and Lys160. ATP is bound at residue 154–161 (GDSGIGKS). Ser161 is a binding site for Mg(2+). The active-site Proton acceptor; for phosphorylation activity. Proton donor; for dephosphorylation activity is Asp178. Residues 202-211 (IEIRGVGIID) form an important for the catalytic mechanism of both phosphorylation and dephosphorylation region. Glu203 lines the Mg(2+) pocket. Arg244 is an active-site residue. The segment at 265-270 (PVKTGR) is important for the catalytic mechanism of dephosphorylation.

Belongs to the HPrK/P family. As to quaternary structure, homohexamer. Requires Mg(2+) as cofactor.

The enzyme catalyses [HPr protein]-L-serine + ATP = [HPr protein]-O-phospho-L-serine + ADP + H(+). It catalyses the reaction [HPr protein]-O-phospho-L-serine + phosphate + H(+) = [HPr protein]-L-serine + diphosphate. In terms of biological role, catalyzes the ATP- as well as the pyrophosphate-dependent phosphorylation of a specific serine residue in HPr, a phosphocarrier protein of the phosphoenolpyruvate-dependent sugar phosphotransferase system (PTS). HprK/P also catalyzes the pyrophosphate-producing, inorganic phosphate-dependent dephosphorylation (phosphorolysis) of seryl-phosphorylated HPr (P-Ser-HPr). The two antagonistic activities of HprK/P are regulated by several intracellular metabolites, which change their concentration in response to the absence or presence of rapidly metabolisable carbon sources (glucose, fructose, etc.) in the growth medium. Therefore, by controlling the phosphorylation state of HPr, HPrK/P is a sensor enzyme that plays a major role in the regulation of carbon metabolism and sugar transport: it mediates carbon catabolite repression (CCR), and regulates PTS-catalyzed carbohydrate uptake and inducer exclusion. The polypeptide is HPr kinase/phosphorylase (Streptococcus pneumoniae serotype 4 (strain ATCC BAA-334 / TIGR4)).